The following is an 87-amino-acid chain: Defensin-like protein 223 (87 aa).

The N-terminal stretch at 1–34 (MKSTIFVLTLLIFVSLYFNIIVYVSFSFIGTSEI) is a signal peptide. 3 disulfide bridges follow: Cys-55-Cys-72, Cys-58-Cys-77, and Cys-62-Cys-79.

Belongs to the DEFL family.

It is found in the secreted. This chain is Defensin-like protein 223, found in Arabidopsis thaliana (Mouse-ear cress).